The following is a 64-amino-acid chain: MSLEDLKSKDVDALRAELLELRQTQMKLRLQKASGQLQQTHQIRNVRRDIARIKTLLTQKKVRV.

Belongs to the universal ribosomal protein uL29 family.

This chain is Large ribosomal subunit protein uL29, found in Dichelobacter nodosus (strain VCS1703A).